The primary structure comprises 241 residues: Orotidine 5'-phosphate decarboxylase (241 aa).

Residues Asp-18, Lys-39, 66–75 (DLKFHDIPAT), Thr-130, Arg-192, Gln-201, Gly-221, and Arg-222 contribute to the substrate site. Lys-68 (proton donor) is an active-site residue.

This sequence belongs to the OMP decarboxylase family. Type 1 subfamily. As to quaternary structure, homodimer.

The enzyme catalyses orotidine 5'-phosphate + H(+) = UMP + CO2. It functions in the pathway pyrimidine metabolism; UMP biosynthesis via de novo pathway; UMP from orotate: step 2/2. Catalyzes the decarboxylation of orotidine 5'-monophosphate (OMP) to uridine 5'-monophosphate (UMP). This chain is Orotidine 5'-phosphate decarboxylase, found in Synechococcus sp. (strain CC9605).